The sequence spans 332 residues: Cinnamoyl-CoA reductase 2 (332 aa).

Residues 12–18 (GAGGYIA), arginine 37, lysine 43, 63–64 (DL), 83–85 (TAS), tyrosine 156, lysine 160, 183–186 (PVLV), and serine 198 contribute to the NADP(+) site. A disulfide bridge connects residues cysteine 149 and cysteine 157. Lysine 160 acts as the Proton donor in catalysis.

It belongs to the NAD(P)-dependent epimerase/dehydratase family. Dihydroflavonol-4-reductase subfamily. In terms of tissue distribution, expressed at low levels in leaves, stems and flowers.

It carries out the reaction (E)-cinnamaldehyde + NADP(+) + CoA = (E)-cinnamoyl-CoA + NADPH + H(+). It participates in aromatic compound metabolism; phenylpropanoid biosynthesis. Functionally, cinnamoyl-CoA reductase probably involved in the formation of phenolic compounds associated with the hypersensitive response. Seems not to be involved in lignin biosynthesis. The chain is Cinnamoyl-CoA reductase 2 (CCR2) from Arabidopsis thaliana (Mouse-ear cress).